Here is a 253-residue protein sequence, read N- to C-terminus: Large ribosomal subunit protein mL57 (253 aa).

A mitochondrion-targeting transit peptide spans 1–28 (MENSMMFISRSLRRPVTALNCNLQSVRT).

The protein belongs to the ribonuclease III family. Mitochondrion-specific ribosomal protein mL57 subfamily. In terms of assembly, component of the mitochondrial large ribosomal subunit (mt-LSU). Mature yeast 74S mitochondrial ribosomes consist of a small (37S) and a large (54S) subunit. The 37S small subunit contains a 15S ribosomal RNA (15S mt-rRNA) and 34 different proteins. The 54S large subunit contains a 21S rRNA (21S mt-rRNA) and 46 different proteins. mL57 forms a heterodimer with mL44 and stabilizes rRNA expansion segments 1/2 at a membrane-facing protuberance close to the point of attachment of the ribosome to the translocon in the membrane.

It localises to the mitochondrion. In terms of biological role, component of the mitochondrial ribosome (mitoribosome), a dedicated translation machinery responsible for the synthesis of mitochondrial genome-encoded proteins, including at least some of the essential transmembrane subunits of the mitochondrial respiratory chain. The mitoribosomes are attached to the mitochondrial inner membrane and translation products are cotranslationally integrated into the membrane. The protein is Large ribosomal subunit protein mL57 (MRPL15) of Saccharomyces cerevisiae (strain ATCC 204508 / S288c) (Baker's yeast).